The chain runs to 872 residues: MSISKIESVNAEKQSPVGTEIGTHTPMMQQYLRIKEQHPDTLLFYRMGDFYELFFEDAEKAARLLDITLTTRGQSAGMPIRMAGVPFHAVEQYLARLVKLGESVVIAEQVGEPGATKGPMERAVSRIVTPGTLTDAALLDDRRDALLLAANMHRGVLGMAWLNLANGEFRLMECPAESLQAQFERLRPAEVLIPDGLALPLMETLAPALRRLADWQFDADTAHRLLTTHFGTRDLAGFGVEEAPVALGAAAALYDYAKATQRQSLAHLTGLRLEREAEFLRLDAATRRNLELTETLRGEPSPTLLSLLDTCMTSMGSRWLRHALHHPLRDRTIPAARQQAVAALVGDGDGLHAQAVRGALRGVADVDRITGRIALRNARPRDLSALRESLSRLPELRQTLAQIGDEGMVGGLAAALDVQPELLQCLQRAIADEPAAMVRDGGVIAAGYDAELDELRGIQTNCGEFLMALEARERERSGIANLKVEFNKVHGFYIEVSHANADKVPDDYRRRQTLKNVERYITPELKAFEDKALSAQERALAREKALYEALLDALSPYIPALQGCARALATLDGLAAFAEAALRYGYVRPVFSDQPGIEIRGGRHPVVERQVEDFIQNDARLGSTRRMLMITGPNMGGKSTFMRQVALICLLAHVGSFVPAQSAVLGPLDAIFTRIGASDDLASGRSTFMVEMTEASAILHGATEHSLVLMDEIGRGTSTFDGLALAFAIARHLLEKNRSLTLFATHYFELTRLNGEYPECANVHLDAVEHGHRIVFLHALEDGPASQSYGIEVAALAGIPAPVIRDAKRRLRALENREVGAGPQADLFAALPDDDDAPLSHPVLIALAEIDPDSLSPREALERLYALKRLSA.

Polar residues predominate over residues 1–17 (MSISKIESVNAEKQSPV). Positions 1–22 (MSISKIESVNAEKQSPVGTEIG) are disordered. 632 to 639 (GPNMGGKS) is a binding site for ATP.

This sequence belongs to the DNA mismatch repair MutS family.

Functionally, this protein is involved in the repair of mismatches in DNA. It is possible that it carries out the mismatch recognition step. This protein has a weak ATPase activity. The polypeptide is DNA mismatch repair protein MutS (Azoarcus sp. (strain BH72)).